We begin with the raw amino-acid sequence, 382 residues long: Chaperone protein DnaJ (382 aa).

One can recognise a J domain in the interval 5–70 (DYYETLGVSR…NKRAAYDRYG (66 aa)). The CR-type zinc finger occupies 140-218 (GKTAQIRVPT…CHGQGRITEE (79 aa)). 8 residues coordinate Zn(2+): Cys-153, Cys-156, Cys-170, Cys-173, Cys-192, Cys-195, Cys-206, and Cys-209. CXXCXGXG motif repeat units follow at residues 153-160 (CDVCSGSG), 170-177 (CGTCQGSG), 192-199 (CPTCHGRG), and 206-213 (CGKCHGQG).

Belongs to the DnaJ family. In terms of assembly, homodimer. Zn(2+) serves as cofactor.

Its subcellular location is the cytoplasm. Participates actively in the response to hyperosmotic and heat shock by preventing the aggregation of stress-denatured proteins and by disaggregating proteins, also in an autonomous, DnaK-independent fashion. Unfolded proteins bind initially to DnaJ; upon interaction with the DnaJ-bound protein, DnaK hydrolyzes its bound ATP, resulting in the formation of a stable complex. GrpE releases ADP from DnaK; ATP binding to DnaK triggers the release of the substrate protein, thus completing the reaction cycle. Several rounds of ATP-dependent interactions between DnaJ, DnaK and GrpE are required for fully efficient folding. Also involved, together with DnaK and GrpE, in the DNA replication of plasmids through activation of initiation proteins. The chain is Chaperone protein DnaJ from Rhizobium rhizogenes (strain K84 / ATCC BAA-868) (Agrobacterium radiobacter).